Consider the following 420-residue polypeptide: Acetyl-CoA acetyltransferase B, mitochondrial (420 aa).

The N-terminal 33 residues, 1–33, are a transit peptide targeting the mitochondrion; sequence MAFCGPRTAARLSHSTRALHYTHRSFASPRTLN. The active-site Acyl-thioester intermediate is cysteine 119. CoA is bound by residues tyrosine 212, 251–253, and lysine 256; that span reads RVD. Tyrosine 212 provides a ligand contact to K(+). Residues alanine 273 and alanine 274 each coordinate K(+). Serine 277 contributes to the CoA binding site. Valine 374 is a K(+) binding site. The Proton donor/acceptor role is filled by cysteine 406.

Belongs to the thiolase-like superfamily. Thiolase family. As to quaternary structure, homotetramer.

The protein localises to the mitochondrion. It carries out the reaction 2 acetyl-CoA = acetoacetyl-CoA + CoA. The catalysed reaction is propanoyl-CoA + acetyl-CoA = 2-methyl-3-oxobutanoyl-CoA + CoA. Its pathway is lipid metabolism; fatty acid beta-oxidation. Functionally, this is one of the enzymes that catalyzes the last step of the mitochondrial beta-oxidation pathway, an aerobic process breaking down fatty acids into acetyl-CoA. Using free coenzyme A/CoA, catalyzes the thiolytic cleavage of medium- to long-chain 3-oxoacyl-CoAs into acetyl-CoA and a fatty acyl-CoA shortened by two carbon atoms. The activity of the enzyme is reversible and it can also catalyze the condensation of two acetyl-CoA molecules into acetoacetyl-CoA. Thereby, it plays a major role in ketone body metabolism. The protein is Acetyl-CoA acetyltransferase B, mitochondrial (acat1-b) of Xenopus laevis (African clawed frog).